The following is a 531-amino-acid chain: Acid-sensing ion channel 3 (531 aa).

Over 1–43 (MKPTSGPEEARRPASDIRVFASNCSMHGLGHVFGPGSLSLRRG) the chain is Cytoplasmic. Residues 44 to 61 (MWAAAVVLSVATFLYQVA) traverse the membrane as a helical segment. Over 62-441 (ERVRYYREFH…SELLGDIGGQ (380 aa)) the chain is Extracellular. 7 cysteine pairs are disulfide-bonded: Cys92–Cys186, Cys164–Cys171, Cys282–Cys370, Cys315–Cys366, Cys319–Cys364, Cys328–Cys350, and Cys330–Cys342. Residue Asn175 is glycosylated (N-linked (GlcNAc...) asparagine). A disordered region spans residues 285–307 (ASLNPNYEPEPSDPLGSPSPSPS). Asn398 carries an N-linked (GlcNAc...) asparagine glycan. A helical membrane pass occupies residues 442–460 (MGLFIGASLLTILEILDYL). Positions 447 to 449 (GAS) match the GAS motif; ion selectivity filter motif. Over 461-531 (CEVFRDKVLG…HRTCYLVTQL (71 aa)) the chain is Cytoplasmic. The PDZ-binding signature appears at 528 to 531 (VTQL).

This sequence belongs to the amiloride-sensitive sodium channel (TC 1.A.6) family. ASIC3 subfamily. In terms of assembly, can form homotrimeric channels. Heterotrimer; forms functional heterotrimers producing channel with different properties. Forms heterotrimers with ASIC2; gives rise to a biphasic current with a sustained current which discriminates poorly between Na(+) and K(+). Interacts with STOM; inhibits ASIC3 acid-evoked current. Interacts with LIN7B (via PDZ domain); increases ASIC3 expression at the plasma membrane. Interacts with MAGI1 (via PDZ domain); probably regulates ASIC3. Interacts with GOPC (via PDZ domain); probably regulates ASIC3. Interacts with DLG4 (via PDZ domain); reduces ASIC3 expression at the plasma membrane. Expressed by sensory neurons. Strongly expressed in brain, spinal cord, lung, lymph nodes, kidney, pituitary, heart and testis.

It is found in the cell membrane. It localises to the cytoplasm. The catalysed reaction is Na(+)(in) = Na(+)(out). The enzyme catalyses K(+)(in) = K(+)(out). It catalyses the reaction Ca(2+)(in) = Ca(2+)(out). With respect to regulation, inhibited by the diuretic drug amiloride. Inhibited by the diuretic drug triamterene. Potentiated by the vertebrate neuropeptide FF (NPFF) and the related FMRFamide. Specifically and reversibly inhibited by the a sea anemone toxin APETx2. Functionally, forms pH-gated heterotrimeric sodium channels that act as postsynaptic excitatory receptors in the nervous system. Upon extracellular acidification, these channels generate a biphasic current with a fast inactivating and a slow sustained phase. ASIC3 is more sensitive to protons and gates between closed, open, and desensitized states faster than other ASICs. Displays high selectivity for sodium ions but can also permit the permeation of other cations. As a neuronal acid sensor, probably contributes to mechanoreception, acid nociception, and heat nociception. By forming heterotrimeric channels with ASIC2, generates a biphasic current with a fast inactivating and a slow sustained phase, which in sensory neurons is proposed to mediate the pain induced by acidosis that occurs in ischemic, damaged or inflamed tissues. This is Acid-sensing ion channel 3 from Homo sapiens (Human).